The following is a 264-amino-acid chain: S-adenosylmethionine decarboxylase proenzyme (264 aa).

Ser112 serves as the catalytic Schiff-base intermediate with substrate; via pyruvic acid. Ser112 carries the post-translational modification Pyruvic acid (Ser); by autocatalysis. His117 functions as the Proton acceptor; for processing activity in the catalytic mechanism. Cys140 (proton donor; for catalytic activity) is an active-site residue.

This sequence belongs to the prokaryotic AdoMetDC family. Type 2 subfamily. Heterooctamer of four alpha and four beta chains arranged as a tetramer of alpha/beta heterodimers. Pyruvate is required as a cofactor. In terms of processing, is synthesized initially as an inactive proenzyme. Formation of the active enzyme involves a self-maturation process in which the active site pyruvoyl group is generated from an internal serine residue via an autocatalytic post-translational modification. Two non-identical subunits are generated from the proenzyme in this reaction, and the pyruvate is formed at the N-terminus of the alpha chain, which is derived from the carboxyl end of the proenzyme. The post-translation cleavage follows an unusual pathway, termed non-hydrolytic serinolysis, in which the side chain hydroxyl group of the serine supplies its oxygen atom to form the C-terminus of the beta chain, while the remainder of the serine residue undergoes an oxidative deamination to produce ammonia and the pyruvoyl group blocking the N-terminus of the alpha chain.

The catalysed reaction is S-adenosyl-L-methionine + H(+) = S-adenosyl 3-(methylsulfanyl)propylamine + CO2. The protein operates within amine and polyamine biosynthesis; S-adenosylmethioninamine biosynthesis; S-adenosylmethioninamine from S-adenosyl-L-methionine: step 1/1. Its function is as follows. Catalyzes the decarboxylation of S-adenosylmethionine to S-adenosylmethioninamine (dcAdoMet), the propylamine donor required for the synthesis of the polyamines spermine and spermidine from the diamine putrescine. The protein is S-adenosylmethionine decarboxylase proenzyme of Pectobacterium atrosepticum (strain SCRI 1043 / ATCC BAA-672) (Erwinia carotovora subsp. atroseptica).